Reading from the N-terminus, the 362-residue chain is Biotin synthase (362 aa).

Residues 14 to 39 (AQRTPEPLPPTSQGLARPSHDVVRGP) are disordered. The region spanning 87 to 316 (HKGGPAALCG…ARDILVCGGR (230 aa)) is the Radical SAM core domain. Residues Cys-105, Cys-109, and Cys-112 each contribute to the [4Fe-4S] cluster site. [2Fe-2S] cluster-binding residues include Cys-181 and Cys-241.

It belongs to the radical SAM superfamily. Biotin synthase family. As to quaternary structure, homodimer. Requires [4Fe-4S] cluster as cofactor. [2Fe-2S] cluster is required as a cofactor.

It catalyses the reaction (4R,5S)-dethiobiotin + (sulfur carrier)-SH + 2 reduced [2Fe-2S]-[ferredoxin] + 2 S-adenosyl-L-methionine = (sulfur carrier)-H + biotin + 2 5'-deoxyadenosine + 2 L-methionine + 2 oxidized [2Fe-2S]-[ferredoxin]. It functions in the pathway cofactor biosynthesis; biotin biosynthesis; biotin from 7,8-diaminononanoate: step 2/2. In terms of biological role, catalyzes the conversion of dethiobiotin (DTB) to biotin by the insertion of a sulfur atom into dethiobiotin via a radical-based mechanism. This chain is Biotin synthase, found in Nitratidesulfovibrio vulgaris (strain ATCC 29579 / DSM 644 / CCUG 34227 / NCIMB 8303 / VKM B-1760 / Hildenborough) (Desulfovibrio vulgaris).